Here is a 107-residue protein sequence, read N- to C-terminus: Iron-binding protein IscA (107 aa).

The Fe cation site is built by Cys35, Cys99, and Cys101.

It belongs to the HesB/IscA family. As to quaternary structure, homodimer; may form tetramers and higher multimers. Requires Fe cation as cofactor.

Is able to transfer iron-sulfur clusters to apo-ferredoxin. Multiple cycles of [2Fe2S] cluster formation and transfer are observed, suggesting that IscA acts catalytically. Recruits intracellular free iron so as to provide iron for the assembly of transient iron-sulfur cluster in IscU in the presence of IscS, L-cysteine and the thioredoxin reductase system TrxA/TrxB. This is Iron-binding protein IscA from Klebsiella pneumoniae subsp. pneumoniae (strain ATCC 700721 / MGH 78578).